We begin with the raw amino-acid sequence, 574 residues long: Membrane protein insertase YidC (574 aa).

6 helical membrane-spanning segments follow: residues 6–26 (VFLI…WGKD), 356–376 (FSIM…LHSF), 380–400 (WGWA…PLSA), 447–467 (GGCL…WVLV), 489–509 (PYFI…KLTP), and 525–545 (PLVF…YWVV).

Belongs to the OXA1/ALB3/YidC family. Type 1 subfamily. As to quaternary structure, interacts with the Sec translocase complex via SecD. Specifically interacts with transmembrane segments of nascent integral membrane proteins during membrane integration.

The protein localises to the cell inner membrane. Its function is as follows. Required for the insertion and/or proper folding and/or complex formation of integral membrane proteins into the membrane. Involved in integration of membrane proteins that insert both dependently and independently of the Sec translocase complex, as well as at least some lipoproteins. Aids folding of multispanning membrane proteins. In Xanthomonas axonopodis pv. citri (strain 306), this protein is Membrane protein insertase YidC.